Consider the following 271-residue polypeptide: Keratin-associated protein 10-5 (271 aa).

Tandem repeats lie at residues 26–30, 51–55, 73–77, 78–82, 88–92, 93–97, 98–102, 110–114, 120–124, 130–134, 135–139, 140–144, 152–156, 162–166, 177–181, 187–191, 199–203, 209–213, 214–218, 233–237, 240–244, and 251–255. Positions 26–255 are 22 X 5 AA repeats of C-C-X(3); that stretch reads CCEPPCGTAP…SYQASCCRPA (230 aa).

Belongs to the KRTAP type 10 family. As to quaternary structure, interacts with hair keratins. Restricted to a narrow region of the hair fiber cuticle, lying approximately 20 cell layers above the apex of the dermal papilla of the hair root; not detected in any other tissues.

In the hair cortex, hair keratin intermediate filaments are embedded in an interfilamentous matrix, consisting of hair keratin-associated proteins (KRTAP), which are essential for the formation of a rigid and resistant hair shaft through their extensive disulfide bond cross-linking with abundant cysteine residues of hair keratins. The matrix proteins include the high-sulfur and high-glycine-tyrosine keratins. The sequence is that of Keratin-associated protein 10-5 (KRTAP10-5) from Homo sapiens (Human).